We begin with the raw amino-acid sequence, 339 residues long: Protein-arginine kinase (339 aa).

Residues Ile-14–Phe-242 enclose the Phosphagen kinase C-terminal domain. Residues Asn-17–Ser-21, Arg-164–Asn-168, and Lys-195–Glu-200 each bind ATP.

The protein belongs to the ATP:guanido phosphotransferase family.

It catalyses the reaction L-arginyl-[protein] + ATP = N(omega)-phospho-L-arginyl-[protein] + ADP + H(+). Functionally, catalyzes the specific phosphorylation of arginine residues in proteins. In Clostridium botulinum (strain Eklund 17B / Type B), this protein is Protein-arginine kinase.